A 232-amino-acid chain; its full sequence is Enolase-phosphatase E1 (232 aa).

This sequence belongs to the HAD-like hydrolase superfamily. MasA/MtnC family. As to quaternary structure, monomer. Mg(2+) serves as cofactor.

The catalysed reaction is 5-methylsulfanyl-2,3-dioxopentyl phosphate + H2O = 1,2-dihydroxy-5-(methylsulfanyl)pent-1-en-3-one + phosphate. It functions in the pathway amino-acid biosynthesis; L-methionine biosynthesis via salvage pathway; L-methionine from S-methyl-5-thio-alpha-D-ribose 1-phosphate: step 3/6. Its pathway is amino-acid biosynthesis; L-methionine biosynthesis via salvage pathway; L-methionine from S-methyl-5-thio-alpha-D-ribose 1-phosphate: step 4/6. Its function is as follows. Bifunctional enzyme that catalyzes the enolization of 2,3-diketo-5-methylthiopentyl-1-phosphate (DK-MTP-1-P) into the intermediate 2-hydroxy-3-keto-5-methylthiopentenyl-1-phosphate (HK-MTPenyl-1-P), which is then dephosphorylated to form the acireductone 1,2-dihydroxy-3-keto-5-methylthiopentene (DHK-MTPene). The polypeptide is Enolase-phosphatase E1 (Xanthomonas campestris pv. campestris (strain B100)).